The sequence spans 285 residues: N(G),N(G)-dimethylarginine dimethylaminohydrolase 1 (285 aa).

Alanine 2 carries the N-acetylalanine modification. Leucine 30, aspartate 73, glutamate 78, aspartate 79, arginine 98, and arginine 145 together coordinate substrate. The Proton donor role is filled by histidine 173. Cysteine 222 is subject to S-nitrosocysteine. A substrate-binding site is contributed by valine 268. Cysteine 274 bears the S-nitrosocysteine mark. Residue cysteine 274 is the Nucleophile of the active site. Cysteine 274 contacts Zn(2+).

Monomer. Widely distributed, highest concentrations found in brain, brain cortex and kidney (at protein level).

The catalysed reaction is N(omega),N(omega)-dimethyl-L-arginine + H2O = dimethylamine + L-citrulline. It carries out the reaction N(omega)-methyl-L-arginine + H2O = L-citrulline + methylamine. With respect to regulation, copurifies with a tightly bound zinc ion. Activated by release of zinc. His and other agents that promote the release of bound zinc ions activate the enzyme (in vitro). Inhibited by S-nitrosylation. Zinc protects the protein against S-nitrosylation. In terms of biological role, hydrolyzes N(G),N(G)-dimethyl-L-arginine (ADMA) and N(G)-monomethyl-L-arginine (MMA) which act as inhibitors of NOS. Has therefore a role in the regulation of nitric oxide generation. The sequence is that of N(G),N(G)-dimethylarginine dimethylaminohydrolase 1 (DDAH1) from Bos taurus (Bovine).